A 324-amino-acid chain; its full sequence is Methyltransferase pytC (324 aa).

The protein belongs to the methyltransferase superfamily. LaeA methyltransferase family.

The protein operates within secondary metabolite biosynthesis. In terms of biological role, methyltransferase; part of the gene cluster that mediates the biosynthesis of pyranterreones, a family of antioxidative compounds. The first step of pyranonigrins biosynthesis is performed by the hybrid PKS-NRPS synthetase pytA that condenses 4 malonyl-CoA units ato the acetyl starter unit by the modular PKS of pytA. The acyl chain is then connected to an L-serine through the amide bond by the modular NRPS of pytA. A tetramic acid is formed and released from the PKS-NRPS pytA to give pyranterreone 5 with the help of the thioesterase pytI. Pyranterreone 5 could be methylated by pytC to afford pyranterreone 6. Both pyranterreones 5 and 6 are subsequently oxidized by the FAD-linked oxidoreductase pytB and the cytochrome P450 monooxygenase pytD to form the fused gamma-pyrone core, resulting in pyranterreones 7 and 11, respectively. The hydroxy group at C-8 of pyranterreones 7 and 11 are dehydrated by the aspartyl protease pytH to form a delta-7 double bond to give pyranterreones 3 and 1, 2 accordingly. The exo-methylene of pyranterreone 3 could be reduced into a pendant methyl by reductase pytE to provide pyranterreone 4, also known as cordylactam. Pyranterreone 4 can be reconverted to pyranterreone 3 through pytB-catalyzed dehydrogenation or further oxidized to pyranterreones 9 and 10. This is Methyltransferase pytC from Aspergillus terreus (strain NIH 2624 / FGSC A1156).